The primary structure comprises 260 residues: UPF0246 protein BceJ2315_22780 (260 aa).

This sequence belongs to the UPF0246 family.

The protein is UPF0246 protein BceJ2315_22780 of Burkholderia cenocepacia (strain ATCC BAA-245 / DSM 16553 / LMG 16656 / NCTC 13227 / J2315 / CF5610) (Burkholderia cepacia (strain J2315)).